A 338-amino-acid polypeptide reads, in one-letter code: Anthranilate phosphoribosyltransferase (338 aa).

5-phospho-alpha-D-ribose 1-diphosphate is bound by residues G81, 84–85 (GD), T89, 91–94 (NIST), 109–117 (KHGNRALSS), and A121. Residue G81 participates in anthranilate binding. A Mg(2+)-binding site is contributed by S93. Residue N112 participates in anthranilate binding. R167 contacts anthranilate. 2 residues coordinate Mg(2+): D225 and E226.

This sequence belongs to the anthranilate phosphoribosyltransferase family. As to quaternary structure, homodimer. Mg(2+) is required as a cofactor.

It carries out the reaction N-(5-phospho-beta-D-ribosyl)anthranilate + diphosphate = 5-phospho-alpha-D-ribose 1-diphosphate + anthranilate. The protein operates within amino-acid biosynthesis; L-tryptophan biosynthesis; L-tryptophan from chorismate: step 2/5. In terms of biological role, catalyzes the transfer of the phosphoribosyl group of 5-phosphorylribose-1-pyrophosphate (PRPP) to anthranilate to yield N-(5'-phosphoribosyl)-anthranilate (PRA). The sequence is that of Anthranilate phosphoribosyltransferase from Rhizobium etli (strain CIAT 652).